Reading from the N-terminus, the 517-residue chain is Crotonobetaine/carnitine--CoA ligase (517 aa).

The protein belongs to the ATP-dependent AMP-binding enzyme family.

The catalysed reaction is 4-(trimethylamino)butanoate + ATP + CoA = 4-(trimethylamino)butanoyl-CoA + AMP + diphosphate. It carries out the reaction crotonobetaine + ATP + CoA = crotonobetainyl-CoA + AMP + diphosphate. It catalyses the reaction (R)-carnitine + ATP + CoA = (R)-carnitinyl-CoA + AMP + diphosphate. Its pathway is amine and polyamine metabolism; carnitine metabolism. Catalyzes the transfer of CoA to carnitine, generating the initial carnitinyl-CoA needed for the CaiB reaction cycle. Also has activity toward crotonobetaine and gamma-butyrobetaine. The chain is Crotonobetaine/carnitine--CoA ligase from Escherichia coli O45:K1 (strain S88 / ExPEC).